Consider the following 537-residue polypeptide: 2-succinyl-5-enolpyruvyl-6-hydroxy-3-cyclohexene-1-carboxylate synthase (537 aa).

This sequence belongs to the TPP enzyme family. MenD subfamily. Homodimer. Mg(2+) serves as cofactor. The cofactor is Mn(2+). It depends on thiamine diphosphate as a cofactor.

It catalyses the reaction isochorismate + 2-oxoglutarate + H(+) = 5-enolpyruvoyl-6-hydroxy-2-succinyl-cyclohex-3-ene-1-carboxylate + CO2. It participates in quinol/quinone metabolism; 1,4-dihydroxy-2-naphthoate biosynthesis; 1,4-dihydroxy-2-naphthoate from chorismate: step 2/7. It functions in the pathway quinol/quinone metabolism; menaquinone biosynthesis. Catalyzes the thiamine diphosphate-dependent decarboxylation of 2-oxoglutarate and the subsequent addition of the resulting succinic semialdehyde-thiamine pyrophosphate anion to isochorismate to yield 2-succinyl-5-enolpyruvyl-6-hydroxy-3-cyclohexene-1-carboxylate (SEPHCHC). The sequence is that of 2-succinyl-5-enolpyruvyl-6-hydroxy-3-cyclohexene-1-carboxylate synthase from Dechloromonas aromatica (strain RCB).